Consider the following 261-residue polypeptide: uncharacterized protein (261 aa).

A signal peptide spans 1–22 (MIHSKKLTLGICLVLLIILIGG). Residue Cys-23 is the site of N-palmitoyl cysteine attachment. Cys-23 carries S-diacylglycerol cysteine lipidation.

This sequence belongs to the staphylococcal tandem lipoprotein family.

The protein resides in the cell membrane. This is an uncharacterized protein from Staphylococcus aureus (strain USA300).